Consider the following 466-residue polypeptide: Asparagine--tRNA ligase (466 aa).

The protein belongs to the class-II aminoacyl-tRNA synthetase family. In terms of assembly, homodimer.

The protein localises to the cytoplasm. The enzyme catalyses tRNA(Asn) + L-asparagine + ATP = L-asparaginyl-tRNA(Asn) + AMP + diphosphate + H(+). The sequence is that of Asparagine--tRNA ligase from Shewanella sediminis (strain HAW-EB3).